We begin with the raw amino-acid sequence, 710 residues long: Ribonuclease R (710 aa).

Positions 246-573 constitute an RNB domain; that stretch reads RKDLRDKVIV…VHRLLKLYLE (328 aa). The S1 motif domain occupies 625–705; that stretch reads GEVFNVVVTN…IRGEIDFVLV (81 aa).

This sequence belongs to the RNR ribonuclease family. RNase R subfamily.

The protein localises to the cytoplasm. The enzyme catalyses Exonucleolytic cleavage in the 3'- to 5'-direction to yield nucleoside 5'-phosphates.. Functionally, 3'-5' exoribonuclease that releases 5'-nucleoside monophosphates and is involved in maturation of structured RNAs. The polypeptide is Ribonuclease R (Thermotoga maritima (strain ATCC 43589 / DSM 3109 / JCM 10099 / NBRC 100826 / MSB8)).